We begin with the raw amino-acid sequence, 302 residues long: MAAAAAETPEVLRECGCKGIRTCLICERQRGSDPPWELPPAKTYRFIYCSDTGWAVGTEESDFEGWAFPFPGVMLIEDFVTREEEAELVRLMDRDPWKLSQSGRRKQDYGPKVNFRKQKLKTEGFCGLPSFSREVVRRMGLYPGLEGFRPVEQCNLDYCPERGSAIDPHLDDAWLWGERLVSLNLLSPTVLSMCREAPGSLLLCSAPSAAPEALVDSVIAPSRSVLCQEVEVAIPLPARSLLVLTGAARHQWKHAIHRRHIEARRVCVTFRELSAEFGPGGRQQELGQELLRIALSFQGRPV.

Ala2 is modified (N-acetylalanine). Thr8 carries the post-translational modification Phosphothreonine. In terms of domain architecture, Fe2OG dioxygenase spans 150 to 274; sequence PVEQCNLDYC…RVCVTFRELS (125 aa). Fe cation-binding residues include His169, Asp171, and His254. A 2-oxoglutarate-binding site is contributed by Arg265.

The protein belongs to the alkB family. As to quaternary structure, interacts with ZFHX3, MLLT3, MLLT1, HSF4, EP300, TES, EIF3C, MTMR6 and PSMA6. Fe(2+) is required as a cofactor. As to expression, widely expressed, with highest expression in pancreas, ovary and spleen.

The protein resides in the cytoplasm. The protein localises to the nucleus. It is found in the nucleolus. Its subcellular location is the midbody. The enzyme catalyses an N(6)-methyl-2'-deoxyadenosine in DNA + 2-oxoglutarate + O2 = a 2'-deoxyadenosine in DNA + formaldehyde + succinate + CO2. It carries out the reaction N(6)-methyl-L-lysyl-[protein] + 2-oxoglutarate + O2 = L-lysyl-[protein] + formaldehyde + succinate + CO2. Functionally, dioxygenase that mediates demethylation of actin monomethylated at 'Lys-84' (K84me1), thereby acting as a regulator of actomyosin-processes. Demethylation of actin K84me1 is required for maintaining actomyosin dynamics supporting normal cleavage furrow ingression during cytokinesis and cell migration. In addition to proteins, also demethylates DNA: specifically demethylates DNA methylated on the 6th position of adenine (N(6)-methyladenosine) DNA, thereby regulating Polycomb silencing. This chain is Alpha-ketoglutarate-dependent dioxygenase alkB homolog 4, found in Homo sapiens (Human).